The primary structure comprises 654 residues: Fructose-1,6-bisphosphatase class 3 (654 aa).

Residues 288-307 (NPAFKPKKRPDKHERLTQRE) are disordered. Residues 298-307 (DKHERLTQRE) are compositionally biased toward basic and acidic residues.

This sequence belongs to the FBPase class 3 family. Mn(2+) is required as a cofactor.

The catalysed reaction is beta-D-fructose 1,6-bisphosphate + H2O = beta-D-fructose 6-phosphate + phosphate. It participates in carbohydrate biosynthesis; gluconeogenesis. In Staphylococcus aureus (strain MRSA252), this protein is Fructose-1,6-bisphosphatase class 3.